Consider the following 210-residue polypeptide: Small ribosomal subunit protein uS4 (210 aa).

The interval 30 to 49 (EKSSLEKRKYPPGLPPKKKG) is disordered. Positions 99–162 (RRLDNVLYRM…QKSAFIEENI (64 aa)) constitute an S4 RNA-binding domain.

This sequence belongs to the universal ribosomal protein uS4 family. Part of the 30S ribosomal subunit. Contacts protein S5. The interaction surface between S4 and S5 is involved in control of translational fidelity.

In terms of biological role, one of the primary rRNA binding proteins, it binds directly to 16S rRNA where it nucleates assembly of the body of the 30S subunit. With S5 and S12 plays an important role in translational accuracy. The protein is Small ribosomal subunit protein uS4 of Leptospira biflexa serovar Patoc (strain Patoc 1 / Ames).